The following is a 449-amino-acid chain: L-lysine-epsilon aminotransferase (449 aa).

2 residues coordinate pyridoxal 5'-phosphate: G128 and A129. The 2-oxoglutarate site is built by R170 and Q274. Residue R170 participates in L-lysine binding. Position 274 (Q274) interacts with pyridoxal 5'-phosphate. Residue K300 is modified to N6-(pyridoxal phosphate)lysine. Residue R422 coordinates 2-oxoglutarate.

This sequence belongs to the class-III pyridoxal-phosphate-dependent aminotransferase family. Pyridoxal 5'-phosphate is required as a cofactor.

It catalyses the reaction L-lysine + 2-oxoglutarate = (S)-2-amino-6-oxohexanoate + L-glutamate. Catalyzes the transfer of the terminal amino group of L-lysine to alpha-ketoglutarate to yield L-glutamate and 2-aminoadipate 6-semialdehyde ((S)-2-amino-6-oxohexanoate), which is spontaneously converted to the dehydrated form 1-piperideine 6-carboxylate. The protein is L-lysine-epsilon aminotransferase of Mycobacterium bovis (strain ATCC BAA-935 / AF2122/97).